A 252-amino-acid chain; its full sequence is Body wall muscle protein HR-29 (252 aa).

Residue Ser2 is modified to N-acetylserine. 3 consecutive repeat copies span residues 37-55, 56-74, and 75-93. Residues 37 to 93 form a 3 X 19 AA approximate tandem repeats region; sequence RDWMTTPYSSTGIGRRDLSQDWMTTPYTPAGVGRRDLSQDWMTTPYTSKGIGSRNLS. The 112-residue stretch at 138–249 folds into the sHSP domain; it reads ISVEHEGKTT…KKTAVPVTVE (112 aa).

Belongs to the small heat shock protein (HSP20) family. As to quaternary structure, exists as an oligomer.

The protein resides in the membrane. Functionally, may be a component of myofibrils where it acts as a stabilizer. This is Body wall muscle protein HR-29 from Halocynthia roretzi (Sea squirt).